A 663-amino-acid polypeptide reads, in one-letter code: Polyunsaturated fatty acid lipoxygenase ALOX12 (663 aa).

One can recognise a PLAT domain in the interval 2–114 (GRYRVRVVTG…ILSLPEGTAR (113 aa)). Positions 115 to 663 (LAGDNALDVF…PSRIENSITI (549 aa)) constitute a Lipoxygenase domain. At serine 246 the chain carries Phosphoserine. Positions 360, 365, 540, 544, and 663 each coordinate Fe cation.

It belongs to the lipoxygenase family. Requires Fe cation as cofactor. Found primarily in platelets and in microsomal and cytosolic fractions of the epidermis (at protein level).

The protein localises to the cytoplasm. The protein resides in the cytosol. Its subcellular location is the membrane. It catalyses the reaction (5Z,8Z,11Z,14Z)-eicosatetraenoate + O2 = (12S)-hydroperoxy-(5Z,8Z,10E,14Z)-eicosatetraenoate. The catalysed reaction is (9Z,12Z)-octadecadienoate + O2 = (13S)-hydroperoxy-(9Z,11E)-octadecadienoate. The enzyme catalyses 2 leukotriene A4 + O2 + 2 H2O = 2 lipoxin A4. It carries out the reaction 2 leukotriene A4 + O2 + 2 H2O = 2 lipoxin B4. It catalyses the reaction (5Z,8Z,11Z)-eicosatrienoate + O2 = (12S)-hydroperoxy-(5Z,8Z,10E)-eicosatrienoate. The catalysed reaction is (8Z,11Z,14Z)-eicosatrienoate + O2 = (12S)-hydroperoxy-(8Z,10E,14Z)-eicosatrienoate. The enzyme catalyses (4Z,7Z,10Z,13Z,16Z,19Z)-docosahexaenoate + O2 = (14S)-hydroperoxy-(4Z,7Z,10Z,12E,16Z,19Z)-docosahexaenoate. It carries out the reaction (7S)-hydroperoxy-(4Z,8E,10Z,13Z,16Z,19Z)-docosahexaenoate + O2 = (7S,14S)-dihydroperoxy-(4Z,8E,10Z,12E,16Z,19Z)-docosahexaenoate. It catalyses the reaction (7S)-hydroperoxy-(4Z,8E,10Z,13Z,16Z,19Z)-docosahexaenoate + O2 = (7S,17S)-dihydroperoxy-(4Z,8E,10Z,13Z,15E,19Z)-docosahexaenoate. The catalysed reaction is (14R,15S)-epoxy-(5Z,8Z,11Z)-eicosatrienoate + O2 = (12S)-hydroperoxy-(14R,15S)-epoxy-(5Z,8Z,10E)-eicosatrienoate. The enzyme catalyses (14S,15R)-epoxy-(5Z,8Z,11Z)-eicosatrienoate + O2 = (12S)-hydroperoxy-(14S,15R)-epoxy-(5Z,8Z,10E)-eicosatrienoate. It carries out the reaction (5Z,8Z,11Z,14Z)-eicosatetraenoate + O2 = (15S)-hydroperoxy-(5Z,8Z,11Z,13E)-eicosatetraenoate. It catalyses the reaction (14S)-hydroperoxy-(4Z,7Z,10Z,12E,16Z,19Z)-docosahexaenoate = (13S,14S)-epoxy-(4Z,7Z,9E,11E,16Z,19Z)-docosahexaenoate + H2O. The catalysed reaction is N-(5Z,8Z,11Z,14Z)-eicosatetraenoyl-L-alanine + O2 = N-(15S)-hydroperoxy-(5Z,8Z,11Z,13E)-eicosatetraenoyl-alanine. The enzyme catalyses N-(5Z,8Z,11Z,14Z)-eicosatetraenoyl-L-alanine + O2 = N-(12S)-hydroperoxy-(5Z,8Z,10E,14Z)-eicosatetraenoyl-alanine. It carries out the reaction N-(5Z,8Z,11Z,14Z)-eicosatetraenoyl-gamma-aminobutanoate + O2 = N-(15S)-hydroperoxy-(5Z,8Z,11Z,13E)-eicosatetraenoyl-gamma-aminobutanoate. It catalyses the reaction N-(5Z,8Z,11Z,14Z)-eicosatetraenoyl-gamma-aminobutanoate + O2 = N-(12S)-hydroperoxy-(5Z,8Z,10E,14Z)-eicosatetraenoyl-gamma-aminobutanoate. The catalysed reaction is N-(5Z,8Z,11Z,14Z)-eicosatetraenoyl-glycine + O2 = N-(15S)-hydroperoxy-(5Z,8Z,11Z,13E)-eicosatetraenoyl-glycine. The enzyme catalyses N-(5Z,8Z,11Z,14Z)-eicosatetraenoyl-glycine + O2 = N-(12S)-hydroperoxy-(5Z,8Z,10E,14Z)-eicosatetraenoyl-glycine. It carries out the reaction N-(5Z,8Z,11Z,14Z)-eicosatetraenoyl-taurine + O2 = N-(12S)-hydroperoxy-(5Z,8Z,10E,14Z)-eicosatetraenoyl-taurine. It catalyses the reaction N-(5Z,8Z,11Z,14Z)-eicosatetraenoyl-taurine + O2 = N-(15S)-hydroperoxy-(5Z,8Z,11Z,13E)-eicosatetraenoyl-taurine. The catalysed reaction is (5Z,8Z,11Z,14Z,17Z)-eicosapentaenoate + O2 = (12S)-hydroperoxy-(5Z,8Z,10E,14Z,17Z)-eicosapentaenoate. The protein operates within lipid metabolism; hydroperoxy eicosatetraenoic acid biosynthesis. With respect to regulation, activated by EGF. Arachidonic acid conversion is inhibited by (13S,14S)-epoxy-(4Z,7Z,9E,11E,16Z,19Z)-docosahexaenoate (13S,14S-epoxy-DHA). Arachidonate 12-lipoxygenase activity is decreased when PH decreases from 7.4 to 6. In terms of biological role, catalyzes the regio and stereo-specific incorporation of molecular oxygen into free and esterified polyunsaturated fatty acids generating lipid hydroperoxides that can be further reduced to the corresponding hydroxy species. Mainly converts arachidonate ((5Z,8Z,11Z,14Z)-eicosatetraenoate) to the specific bioactive lipid (12S)-hydroperoxyeicosatetraenoate/(12S)-HPETE. Through the production of bioactive lipids like (12S)-HPETE it regulates different biological processes including platelet activation. It can also catalyze the epoxidation of double bonds of polyunsaturated fatty acids such as (14S)-hydroperoxy-docosahexaenoate/(14S)-HPDHA resulting in the formation of (13S,14S)-epoxy-DHA. Furthermore, it may participate in the sequential oxidations of DHA ((4Z,7Z,10Z,13Z,16Z,19Z)-docosahexaenoate) to generate specialized pro-resolving mediators (SPMs) like resolvin D5 ((7S,17S)-diHPDHA) and (7S,14S)-diHPDHA, that actively down-regulate the immune response and have anti-aggregation properties with platelets. An additional function involves a multistep process by which it transforms leukotriene A4/LTA4 into the bioactive lipids lipoxin A4/LXA4 and lipoxin B4/LXB4, both are vasoactive and LXA4 may regulate neutrophil function via occupancy of specific recognition sites. Can also peroxidize linoleate ((9Z,12Z)-octadecadienoate) to (13S)-hydroperoxyoctadecadienoate/ (13S-HPODE). Due to its role in regulating both the expression of the vascular endothelial growth factor (VEGF, an angiogenic factor involved in the survival and metastasis of solid tumors) and the expression of integrin beta-1 (known to affect tumor cell migration and proliferation), it can be regarded as protumorigenic. Important for cell survival, as it may play a role not only in proliferation but also in the prevention of apoptosis in vascular smooth muscle cells. This is Polyunsaturated fatty acid lipoxygenase ALOX12 (Alox12) from Mus musculus (Mouse).